A 224-amino-acid chain; its full sequence is Tumor protein D52 (224 aa).

Residues 29-53 (LSPSGNTSPPGSPTQNVGLLKTEPV) form a disordered region. A Phosphothreonine modification is found at threonine 35. 2 positions are modified to phosphoserine: serine 36 and serine 40. Residues 61–113 (VTMLSAPEALTEEEQEELRRELTKVEEEIQTLSQVLAAKEKHLAELKRKLGIS) are a coiled coil. A phosphoserine mark is found at threonine 138, serine 175, and serine 223. The interval 186–224 (KVGGAKPAGGDFGEVLNSTANATSTMTTEPPPEQMTESP) is disordered. Residues 202 to 224 (NSTANATSTMTTEPPPEQMTESP) are compositionally biased toward low complexity.

It belongs to the TPD52 family. In terms of assembly, forms a homodimer or heterodimer with other members of the family. In terms of tissue distribution, isoform 2 is expressed at higher levels in kidney and brain than in liver, lung, testis and heart. Within the brain, isoform 2 is highly expressed in the granular layer of the cerebellum, the cortex and the hippocampus. In embryos, isoform 2 is expressed in the epithelium of the developing intestine, stomach, olfactory epithelium, neuronal layers of the retina, salivary gland, kidney and dorsal root ganglion.

In Mus musculus (Mouse), this protein is Tumor protein D52 (Tpd52).